Reading from the N-terminus, the 646-residue chain is MSWSLRVDKPDTGESPFKHSLVTGAQEIPISSFADKTFTAPAQIRNFCIIAHIDHGKSTLADRMLQLTGVVDERSMRAQYLDRMDIERERGITIKAQNVRLSWSVTAGGTTENYVLHLIDTPGHVDFTYEVSRALEACEGAVLLVDAVQGIEAQTLANLYLALERDLTIIPVLNKIDLPAADPDRYAAEIAHIIGYESGDVLRVSGKTGEGVSDLLDEVVRRVPHPQGDPDAPTRAMIFDSVYDIYRGVVTYVRVVDGKISPRERIAMMSTGATYELLEVGIVSPEPKASAGLGVGEVGYLITGVKDVRQSKVGDTVTTVRYGATEPLTGYREPKPMVYSGLYPVDSSDYPSLRDALGKLQLNDAALTYEPETSVALGVGYRCGFLGLLHIDITRERLEREFDLDLISTSPNVVYRVVTEDNTEIVVTNPSDWPEGKIRTVYEPVVKITIIAPSEFIGTIMELCQSRRGELGGMDYLSPERVELRYIMPLGEIIFDFFDSLKSRTRGYASLDYEEAGEQEAQLVKVDILLQGEAVDAFSAIVHKDSASAYGNKMTNKLKELIPRQQFEVPVQAAIGSKVIARENIRAIRKDVLSKCYGGDITRKRKLLEKQKEGKKRMKTIGRVEVPQEAFVAALSADAAGDKDKK.

One can recognise a tr-type G domain in the interval 42–227 (AQIRNFCIIA…EVVRRVPHPQ (186 aa)). GTP contacts are provided by residues 54–59 (DHGKST) and 174–177 (NKID).

Belongs to the TRAFAC class translation factor GTPase superfamily. Classic translation factor GTPase family. LepA subfamily.

The protein resides in the cell membrane. It catalyses the reaction GTP + H2O = GDP + phosphate + H(+). In terms of biological role, required for accurate and efficient protein synthesis under certain stress conditions. May act as a fidelity factor of the translation reaction, by catalyzing a one-codon backward translocation of tRNAs on improperly translocated ribosomes. Back-translocation proceeds from a post-translocation (POST) complex to a pre-translocation (PRE) complex, thus giving elongation factor G a second chance to translocate the tRNAs correctly. Binds to ribosomes in a GTP-dependent manner. The sequence is that of Elongation factor 4 from Mycobacterium leprae (strain Br4923).